We begin with the raw amino-acid sequence, 473 residues long: UDP-N-acetylmuramate--L-alanine ligase (473 aa).

ATP is bound at residue Gly-122 to Thr-128.

It belongs to the MurCDEF family.

Its subcellular location is the cytoplasm. The enzyme catalyses UDP-N-acetyl-alpha-D-muramate + L-alanine + ATP = UDP-N-acetyl-alpha-D-muramoyl-L-alanine + ADP + phosphate + H(+). It functions in the pathway cell wall biogenesis; peptidoglycan biosynthesis. In terms of biological role, cell wall formation. The sequence is that of UDP-N-acetylmuramate--L-alanine ligase from Teredinibacter turnerae (strain ATCC 39867 / T7901).